The following is a 168-amino-acid chain: Putative defense protein 1 (168 aa).

Residues 1 to 18 (MMFAYIVAVVSALALTSA) form the signal peptide. A Reelin domain is found at 19–168 (FPTGAPRSAC…SAPVKILSHH (150 aa)). Cys28 and Cys105 are oxidised to a cystine.

It belongs to the insect defense protein family. Very highly expressed in midgut, and highly expressed in fat body, silk gland and epidermis.

Its subcellular location is the secreted. As this protein is expressed upon bacterial infection, it may have antimicrobial activity. This is Putative defense protein 1 from Antheraea mylitta (Tasar silkworm).